Here is a 70-residue protein sequence, read N- to C-terminus: uncharacterized protein (70 aa).

The chain crosses the membrane as a helical span at residues Val-4 to Tyr-24.

It is found in the host membrane. This is an uncharacterized protein from Dryophytes versicolor (chameleon treefrog).